The sequence spans 205 residues: MSAIAPGMILFAYLCGSISSAILVCRIAGLPDPRESGSGNPGATNVLRIGGKGAAVAVLIFDILKGMLPVWGAYALGITPFWLGLIAIAACLGHIWPVFFGFKGGKGVATAFGAIAPIGWDLTGVIAGTWLLTVLLSGYSSLGAIVSALIAPFYVWWFKPQFTFPVSMLSCLILLRHHDNIQRLWRRQETKIWTKLKKKREKESK.

Residues 1-3 (MSA) lie on the Periplasmic side of the membrane. The chain crosses the membrane as a helical span at residues 4–24 (IAPGMILFAYLCGSISSAILV). Residues 25 to 52 (CRIAGLPDPRESGSGNPGATNVLRIGGK) lie on the Cytoplasmic side of the membrane. A helical transmembrane segment spans residues 53–73 (GAAVAVLIFDILKGMLPVWGA). Residues 74-80 (YALGITP) are Periplasmic-facing. A helical transmembrane segment spans residues 81 to 101 (FWLGLIAIAACLGHIWPVFFG). The Cytoplasmic segment spans residues 102 to 111 (FKGGKGVATA). Residues 112–132 (FGAIAPIGWDLTGVIAGTWLL) traverse the membrane as a helical segment. Over 133–137 (TVLLS) the chain is Periplasmic. Residues 138 to 158 (GYSSLGAIVSALIAPFYVWWF) form a helical membrane-spanning segment. The Cytoplasmic segment spans residues 159 to 205 (KPQFTFPVSMLSCLILLRHHDNIQRLWRRQETKIWTKLKKKREKESK).

It belongs to the PlsY family. In terms of assembly, probably interacts with PlsX.

It localises to the cell inner membrane. The catalysed reaction is sn-glycerol 3-phosphate + an acyl-CoA = a 1-acyl-sn-glycero-3-phosphate + CoA. It carries out the reaction a fatty acyl-[ACP] + sn-glycerol 3-phosphate = a 1-acyl-sn-glycero-3-phosphate + holo-[ACP]. The protein operates within lipid metabolism; phospholipid metabolism. Functionally, catalyzes the transfer of an acyl group from acyl-ACP to glycerol-3-phosphate (G3P) to form lysophosphatidic acid (LPA). This enzyme can also utilize acyl-CoA as fatty acyl donor, but not acyl-PO(4). This is Glycerol-3-phosphate acyltransferase from Salmonella arizonae (strain ATCC BAA-731 / CDC346-86 / RSK2980).